A 324-amino-acid chain; its full sequence is NADH-ubiquinone oxidoreductase chain 1 (324 aa).

Transmembrane regions (helical) follow at residues 9 to 29 (IINPLAYIVPVLLAVAFLTLL), 43 to 63 (PNIVGPYGLLQPIADGLKLFI), 75 to 95 (FLFLATPMLALTLALTLWAPM), 106 to 126 (LGVLFVLALSSLAVYSILGSG), 146 to 166 (ISYEVSLGLILLSVIIFTGGF), 177 to 197 (SIWLLVPAWPLAAMWYISTLA), 237 to 257 (ILLMNTLSAILFLGASHIPAF), 259 to 279 (ELTAVNLMTKAALLSVVFLWV), and 299 to 319 (FLPLTLALVLWHLALPTAMAG).

Belongs to the complex I subunit 1 family.

The protein localises to the mitochondrion inner membrane. It catalyses the reaction a ubiquinone + NADH + 5 H(+)(in) = a ubiquinol + NAD(+) + 4 H(+)(out). Core subunit of the mitochondrial membrane respiratory chain NADH dehydrogenase (Complex I) that is believed to belong to the minimal assembly required for catalysis. Complex I functions in the transfer of electrons from NADH to the respiratory chain. The immediate electron acceptor for the enzyme is believed to be ubiquinone. In Salmo salar (Atlantic salmon), this protein is NADH-ubiquinone oxidoreductase chain 1 (MT-ND1).